Consider the following 156-residue polypeptide: ATP synthase subunit b (156 aa).

Residues 13-33 (AFIIFVWFCMKFVWPPLMNAI) traverse the membrane as a helical segment.

It belongs to the ATPase B chain family. As to quaternary structure, F-type ATPases have 2 components, F(1) - the catalytic core - and F(0) - the membrane proton channel. F(1) has five subunits: alpha(3), beta(3), gamma(1), delta(1), epsilon(1). F(0) has three main subunits: a(1), b(2) and c(10-14). The alpha and beta chains form an alternating ring which encloses part of the gamma chain. F(1) is attached to F(0) by a central stalk formed by the gamma and epsilon chains, while a peripheral stalk is formed by the delta and b chains.

The protein localises to the cell inner membrane. Its function is as follows. F(1)F(0) ATP synthase produces ATP from ADP in the presence of a proton or sodium gradient. F-type ATPases consist of two structural domains, F(1) containing the extramembraneous catalytic core and F(0) containing the membrane proton channel, linked together by a central stalk and a peripheral stalk. During catalysis, ATP synthesis in the catalytic domain of F(1) is coupled via a rotary mechanism of the central stalk subunits to proton translocation. Component of the F(0) channel, it forms part of the peripheral stalk, linking F(1) to F(0). The polypeptide is ATP synthase subunit b (Shewanella sediminis (strain HAW-EB3)).